The sequence spans 167 residues: MSRTLDLILLCRLVQDTAHLLMRITLQWDINEMSYFYSASTNGFYSTEFHGTNIPDDAVEISESEWETLINSQGVTKMITCGENGHPVIVDRPSPTPERLALINDEKKSALIAEATNVIAPLQDAVDLGMATDDETKLLLAWEKYRVLLMRVDIKNTEWPKKPEGNK.

The protein belongs to the tfa family.

Functionally, chaperone involved in tail fiber assembly. In Shigella phage SfV (Shigella flexneri bacteriophage V), this protein is Probable tail fiber assembly protein (22).